A 57-amino-acid chain; its full sequence is uncharacterized protein (57 aa).

The disordered stretch occupies residues 1–57 (MDDTLPKQMTPTDTSPLKEEQAHCNNKTLENQPKNINDNKCTDSQNTDLQNTEPSKV). A compositionally biased stretch (polar residues) spans 23-57 (HCNNKTLENQPKNINDNKCTDSQNTDLQNTEPSKV).

This is an uncharacterized protein from Ornithodoros (relapsing fever ticks).